A 517-amino-acid chain; its full sequence is Lysine--tRNA ligase (517 aa).

Residues 1–21 are disordered; that stretch reads MTEPNRAQAPAQNKAAADTPA. Positions 7-20 are enriched in low complexity; the sequence is AQAPAQNKAAADTP. Mg(2+) is bound by residues Glu-427 and Glu-434.

This sequence belongs to the class-II aminoacyl-tRNA synthetase family. In terms of assembly, homodimer. The cofactor is Mg(2+).

Its subcellular location is the cytoplasm. It carries out the reaction tRNA(Lys) + L-lysine + ATP = L-lysyl-tRNA(Lys) + AMP + diphosphate. The sequence is that of Lysine--tRNA ligase from Cupriavidus taiwanensis (strain DSM 17343 / BCRC 17206 / CCUG 44338 / CIP 107171 / LMG 19424 / R1) (Ralstonia taiwanensis (strain LMG 19424)).